Here is a 535-residue protein sequence, read N- to C-terminus: Protein PyrBI (535 aa).

The aspartate carbamoyltransferase stretch occupies residues 1-341 (MENKFMGRSL…MIAGKIGDDY (341 aa)). The tract at residues 342–370 (KGPEPKSCERVEDEDYIVEVPINNSKESK) is linker. The segment at 371–535 (VETFSEGVRP…FKEIWGEKKN (165 aa)) is aspartate carbamoyltransferase regulatory region. Cys488, Cys493, Cys517, and Cys520 together coordinate Zn(2+).

In the N-terminal section; belongs to the aspartate/ornithine carbamoyltransferase superfamily. ATCase family. It in the C-terminal section; belongs to the PyrI family.

The enzyme catalyses carbamoyl phosphate + L-aspartate = N-carbamoyl-L-aspartate + phosphate + H(+). The protein operates within pyrimidine metabolism; UMP biosynthesis via de novo pathway; (S)-dihydroorotate from bicarbonate: step 2/3. This is Protein PyrBI (pyrBI) from Treponema denticola (strain ATCC 35405 / DSM 14222 / CIP 103919 / JCM 8153 / KCTC 15104).